Reading from the N-terminus, the 99-residue chain is Carboxysome shell vertex protein CcmL (99 aa).

One can recognise a BMV domain in the interval 1–83; that stretch reads MKIARVCGTV…IDAAVVAIID (83 aa).

This sequence belongs to the CcmL/EutN family. CcmL subfamily. Homopentamer. May interact with CcmK2, this occurs at very high CcmK2 concentrations. Interacts with full-length CcmM.

It is found in the carboxysome. Probably forms vertices in the carboxysome, a polyhedral inclusion where RuBisCO (ribulose bisphosphate carboxylase, rbcL-rbcS) is sequestered. Has been modeled to induce curvature upon insertion into an otherwise flat hexagonal molecular layer of CcmK subunits. This is Carboxysome shell vertex protein CcmL from Thermosynechococcus vestitus (strain NIES-2133 / IAM M-273 / BP-1).